The sequence spans 281 residues: UPF0273 protein PAE3143 (281 aa).

Residues 4 to 248 (PRVRSYVPGL…YIKITGSSVR (245 aa)) enclose the KaiC domain. Position 31–38 (31–38 (GGPGTGKS)) interacts with ATP.

Belongs to the UPF0273 family.

The protein is UPF0273 protein PAE3143 of Pyrobaculum aerophilum (strain ATCC 51768 / DSM 7523 / JCM 9630 / CIP 104966 / NBRC 100827 / IM2).